The following is a 296-amino-acid chain: Nucleotide-binding protein M6_Spy0559 (296 aa).

13–20 contacts ATP; the sequence is GMSGAGKT. 63–66 lines the GTP pocket; it reads DMRS.

Belongs to the RapZ-like family.

Functionally, displays ATPase and GTPase activities. This chain is Nucleotide-binding protein M6_Spy0559, found in Streptococcus pyogenes serotype M6 (strain ATCC BAA-946 / MGAS10394).